Reading from the N-terminus, the 82-residue chain is Consomatin Mao1 (82 aa).

The signal sequence occupies residues 1 to 22; that stretch reads MQTASWVMVMMMVWITAPLSEG. The propeptide occupies 23-57; that stretch reads GKLNDVIRGLVPDDVTPQLILRSLFFHRPSDSVVR. Residues Cys65 and Cys70 are joined by a disulfide bond. The residue at position 67 (Trp67) is a D-tryptophan. 4-hydroxyproline is present on residues Pro71, Pro72, and Pro74. Residues 75 to 82 constitute a propeptide that is removed on maturation; that stretch reads WRRPNGKG.

It belongs to the conotoxin C superfamily. Consomatin family. In terms of tissue distribution, expressed by the venom duct.

The protein localises to the secreted. Its function is as follows. Moderately activates human somatostatin receptors (SSTR) with a preferential activation of SSTR1 and SSTR4. In vivo, does not cause behavioral changes in mice within a few minutes of intracranial injection, but causes a progressive loss of movement thereafter. Four to five hours after injection, mice recover, even with the highest dose tested. Shows antinociception and antihyperalgesia activities in two mouse models of acute pain, most probably by acting outside the central nervous system. This is Consomatin Mao1 from Conus maioensis (Sea snail).